The chain runs to 519 residues: C-glycoside 3-oxidase (519 aa).

Glutamate 41 lines the FAD pocket. Residues 43–93 form a disordered region; sequence GPTVSNPPGAHVKNIEDPERRSHAQRASEGPGAGAETVNSPGAVKSGERRA. Residues 55–64 are compositionally biased toward basic and acidic residues; sequence KNIEDPERRS. Serine 118, asparagine 120, methionine 124, threonine 129, alanine 131, and valine 234 together coordinate FAD. The Proton acceptor role is filled by histidine 440. FAD-binding residues include asparagine 474 and threonine 486.

Belongs to the GMC oxidoreductase family. In terms of assembly, monomer. Requires FAD as cofactor.

It carries out the reaction isovitexin + O2 = 3''-dehydroisovitexin + H2O2. The catalysed reaction is isoorientin + O2 = 3''-dehydroisoorientin + H2O2. The enzyme catalyses mangiferin + O2 = 3'-dehydromangiferin + H2O2. FAD-dependent C-glycoside-metabolizing enzyme that participates in the degradation of certain C-glycosides by catalyzing the oxidation of the hydroxyl group at the C3 position of the sugar moiety. Shows oxidase activity toward various C-glycosides such as isovitexin, isoorientin and mangiferin but cannot use carminic acid, puerarin, orientin or aloesin. Shows weak activity (100 to 1000-fold lower) with O-glycosides. Probably plays a crucial role in the metabolism of C-glycosides in nature. In Arthrobacter globiformis (strain ATCC 8010 / DSM 20124 / JCM 1332 / NBRC 12137 / NCIMB 8907 / NRRL B-2979 / 168), this protein is C-glycoside 3-oxidase.